We begin with the raw amino-acid sequence, 101 residues long: Large ribosomal subunit protein eL36 (101 aa).

Disordered regions lie at residues 1 to 31 (MGEIAVGLNKGHQVTKKAGTPRPSRRKGFLS) and 75 to 101 (GTHMRGKKKREEMAGVLRKMQAASKGE).

The protein belongs to the eukaryotic ribosomal protein eL36 family.

The sequence is that of Large ribosomal subunit protein eL36 (RL36) from Ulva compressa (Green alga).